The chain runs to 858 residues: Toll-like receptor 5 (858 aa).

The first 20 residues, Met-1–Gly-20, serve as a signal peptide directing secretion. The Extracellular portion of the chain corresponds to Ile-21–Lys-639. 2 N-linked (GlcNAc...) asparagine glycosylation sites follow: Asn-37 and Asn-46. 9 LRR repeats span residues Leu-45 to Phe-68, Gln-71 to Asn-93, Pro-95 to Gly-117, His-120 to Asn-143, Ala-146 to Phe-166, Ser-171 to Pro-192, Thr-197 to Arg-211, Val-214 to Glu-229, and Ser-234 to Gly-235. A glycan (N-linked (GlcNAc...) asparagine) is linked at Asn-245. 11 LRR repeats span residues Leu-260–Gly-284, Ser-289–Phe-301, Asp-313–Gly-334, Asn-337–Asn-355, Lys-385–Phe-401, Gly-412–Ser-431, His-449–Ser-470, Ser-474–Trp-495, His-503–His-524, Ala-527–Leu-546, and Asn-549–Val-567. Asn-342 is a glycosylation site (N-linked (GlcNAc...) asparagine). Asn-422 carries an N-linked (GlcNAc...) asparagine glycan. The LRRCT domain maps to Asn-579 to Glu-631. 2 disulfides stabilise this stretch: Cys-583–Cys-610 and Cys-585–Cys-629. Residues Asn-595 and Asn-598 are each glycosylated (N-linked (GlcNAc...) asparagine). A helical transmembrane segment spans residues Phe-640–Val-660. The Cytoplasmic segment spans residues Thr-661 to Ser-858. The region spanning Tyr-691–Ile-836 is the TIR domain. Position 798 is a phosphotyrosine (Tyr-798). At Ser-805 the chain carries Phosphoserine; by PKD/PRKD1.

It belongs to the Toll-like receptor family. As to quaternary structure, homodimer. Interacts with MYD88 (via TIR domain). Interacts with TICAM1 (via TIR domain). Interacts with UNC93B1; this interaction is essential for proper TLR5 localization to the plasma membrane. In terms of processing, phosphorylated at Ser-805 by PKD/PRKD1; phosphorylation induces the production of inflammatory cytokines. Post-translationally, phosphorylated at Tyr-798 upon flagellin binding; required for signaling. Highly expressed on the basolateral surface of intestinal epithelia. Expressed also in other cells such as lung epithelial cells.

The protein localises to the cell membrane. Functionally, pattern recognition receptor (PRR) located on the cell surface that participates in the activation of innate immunity and inflammatory response. Recognizes small molecular motifs named pathogen-associated molecular pattern (PAMPs) expressed by pathogens and microbe-associated molecular patterns (MAMPs) usually expressed by resident microbiota. Upon ligand binding such as bacterial flagellins, recruits intracellular adapter proteins MYD88 and TRIF leading to NF-kappa-B activation, cytokine secretion and induction of the inflammatory response. Plays thereby an important role in the relationship between the intestinal epithelium and enteric microbes and contributes to the gut microbiota composition throughout life. This Homo sapiens (Human) protein is Toll-like receptor 5 (TLR5).